Here is a 527-residue protein sequence, read N- to C-terminus: Bifunctional purine biosynthesis protein PurH (527 aa).

The 148-residue stretch at 9 to 156 (NAKRPIRRAL…KNHPSVAVVV (148 aa)) folds into the MGS-like domain.

This sequence belongs to the PurH family.

The enzyme catalyses (6R)-10-formyltetrahydrofolate + 5-amino-1-(5-phospho-beta-D-ribosyl)imidazole-4-carboxamide = 5-formamido-1-(5-phospho-D-ribosyl)imidazole-4-carboxamide + (6S)-5,6,7,8-tetrahydrofolate. It carries out the reaction IMP + H2O = 5-formamido-1-(5-phospho-D-ribosyl)imidazole-4-carboxamide. The protein operates within purine metabolism; IMP biosynthesis via de novo pathway; 5-formamido-1-(5-phospho-D-ribosyl)imidazole-4-carboxamide from 5-amino-1-(5-phospho-D-ribosyl)imidazole-4-carboxamide (10-formyl THF route): step 1/1. Its pathway is purine metabolism; IMP biosynthesis via de novo pathway; IMP from 5-formamido-1-(5-phospho-D-ribosyl)imidazole-4-carboxamide: step 1/1. The polypeptide is Bifunctional purine biosynthesis protein PurH (Mycolicibacterium paratuberculosis (strain ATCC BAA-968 / K-10) (Mycobacterium paratuberculosis)).